The sequence spans 134 residues: Interleukin-4 (134 aa).

The N-terminal stretch at 1–23 is a signal peptide; the sequence is MGLTYQLLPALVCLLACTSFIQG. 2 cysteine pairs are disulfide-bonded: cysteine 24/cysteine 133 and cysteine 48/cysteine 88. Residue asparagine 38 is glycosylated (N-linked (GlcNAc...) asparagine). Residue asparagine 101 is glycosylated (N-linked (GlcNAc...) asparagine).

It belongs to the IL-4/IL-13 family.

The protein resides in the secreted. In terms of biological role, participates in at least several B-cell activation processes as well as of other cell types. It is a costimulator of DNA-synthesis. It induces the expression of class II MHC molecules on resting B-cells. It enhances both secretion and cell surface expression of IgE and IgG1. It also regulates the expression of the low affinity Fc receptor for IgE (CD23) on both lymphocytes and monocytes. Positively regulates IL31RA expression in macrophages. Stimulates autophagy in dendritic cells by interfering with mTORC1 signaling and through the induction of RUFY4. In Equus caballus (Horse), this protein is Interleukin-4 (IL4).